The following is a 458-amino-acid chain: Bifunctional protein GlmU (458 aa).

Residues 1-229 (MNKFAIVLAA…FDESLGVNDR (229 aa)) form a pyrophosphorylase region. UDP-N-acetyl-alpha-D-glucosamine-binding positions include 8 to 11 (LAAG), K22, Q72, and 77 to 78 (GT). A Mg(2+)-binding site is contributed by D102. UDP-N-acetyl-alpha-D-glucosamine is bound by residues G139, E154, N169, and N227. A Mg(2+)-binding site is contributed by N227. Residues 230-250 (VALSQAEATMRKRINHEHMVN) are linker. Positions 251-458 (GVTLIDPATT…AKKMPHYRGQ (208 aa)) are N-acetyltransferase. UDP-N-acetyl-alpha-D-glucosamine-binding residues include R332 and K350. Catalysis depends on H362, which acts as the Proton acceptor. UDP-N-acetyl-alpha-D-glucosamine is bound by residues Y365 and N376. A379, S404, A422, and R439 together coordinate acetyl-CoA.

This sequence in the N-terminal section; belongs to the N-acetylglucosamine-1-phosphate uridyltransferase family. It in the C-terminal section; belongs to the transferase hexapeptide repeat family. As to quaternary structure, homotrimer. Mg(2+) serves as cofactor.

Its subcellular location is the cytoplasm. It catalyses the reaction alpha-D-glucosamine 1-phosphate + acetyl-CoA = N-acetyl-alpha-D-glucosamine 1-phosphate + CoA + H(+). The enzyme catalyses N-acetyl-alpha-D-glucosamine 1-phosphate + UTP + H(+) = UDP-N-acetyl-alpha-D-glucosamine + diphosphate. It participates in nucleotide-sugar biosynthesis; UDP-N-acetyl-alpha-D-glucosamine biosynthesis; N-acetyl-alpha-D-glucosamine 1-phosphate from alpha-D-glucosamine 6-phosphate (route II): step 2/2. The protein operates within nucleotide-sugar biosynthesis; UDP-N-acetyl-alpha-D-glucosamine biosynthesis; UDP-N-acetyl-alpha-D-glucosamine from N-acetyl-alpha-D-glucosamine 1-phosphate: step 1/1. It functions in the pathway bacterial outer membrane biogenesis; LPS lipid A biosynthesis. Functionally, catalyzes the last two sequential reactions in the de novo biosynthetic pathway for UDP-N-acetylglucosamine (UDP-GlcNAc). The C-terminal domain catalyzes the transfer of acetyl group from acetyl coenzyme A to glucosamine-1-phosphate (GlcN-1-P) to produce N-acetylglucosamine-1-phosphate (GlcNAc-1-P), which is converted into UDP-GlcNAc by the transfer of uridine 5-monophosphate (from uridine 5-triphosphate), a reaction catalyzed by the N-terminal domain. The sequence is that of Bifunctional protein GlmU from Lactococcus lactis subsp. cremoris (strain MG1363).